Here is a 345-residue protein sequence, read N- to C-terminus: Protein-glutamate methylesterase/protein-glutamine glutaminase (345 aa).

The region spanning 5 to 123 is the Response regulatory domain; it reads KVIVVDDSVL…ELSKMKDDLI (119 aa). Position 56 is a 4-aspartylphosphate (aspartate 56). A CheB-type methylesterase domain is found at 153–343; it reads SSDSIEAVVI…DEIIKIVRGL (191 aa). Active-site residues include serine 165, histidine 192, and aspartate 285.

The protein belongs to the CheB family. Post-translationally, phosphorylated by CheA. Phosphorylation of the N-terminal regulatory domain activates the methylesterase activity.

It localises to the cytoplasm. It carries out the reaction [protein]-L-glutamate 5-O-methyl ester + H2O = L-glutamyl-[protein] + methanol + H(+). The catalysed reaction is L-glutaminyl-[protein] + H2O = L-glutamyl-[protein] + NH4(+). In terms of biological role, involved in chemotaxis. Part of a chemotaxis signal transduction system that modulates chemotaxis in response to various stimuli. Catalyzes the demethylation of specific methylglutamate residues introduced into the chemoreceptors (methyl-accepting chemotaxis proteins or MCP) by CheR. Also mediates the irreversible deamidation of specific glutamine residues to glutamic acid. The chain is Protein-glutamate methylesterase/protein-glutamine glutaminase from Clostridium acetobutylicum (strain ATCC 824 / DSM 792 / JCM 1419 / IAM 19013 / LMG 5710 / NBRC 13948 / NRRL B-527 / VKM B-1787 / 2291 / W).